Consider the following 162-residue polypeptide: Large ribosomal subunit protein bL17 (162 aa).

Residues Arg-118–Glu-162 are disordered. Positions Ala-126–Glu-162 are enriched in basic and acidic residues.

Belongs to the bacterial ribosomal protein bL17 family. As to quaternary structure, part of the 50S ribosomal subunit. Contacts protein L32.

In Anaeromyxobacter dehalogenans (strain 2CP-C), this protein is Large ribosomal subunit protein bL17.